Consider the following 994-residue polypeptide: Glycine dehydrogenase (decarboxylating), mitochondrial (994 aa).

The N-terminal 21 residues, methionine 1–tyrosine 21, are a transit peptide targeting the mitochondrion. Lysine 742 is modified (N6-(pyridoxal phosphate)lysine).

It belongs to the GcvP family. As to quaternary structure, homodimer. The glycine cleavage system is composed of four proteins: P, T, L and H. The cofactor is pyridoxal 5'-phosphate.

It localises to the mitochondrion. The catalysed reaction is N(6)-[(R)-lipoyl]-L-lysyl-[glycine-cleavage complex H protein] + glycine + H(+) = N(6)-[(R)-S(8)-aminomethyldihydrolipoyl]-L-lysyl-[glycine-cleavage complex H protein] + CO2. Its function is as follows. The glycine cleavage system catalyzes the degradation of glycine. The P protein binds the alpha-amino group of glycine through its pyridoxal phosphate cofactor; CO(2) is released and the remaining methylamine moiety is then transferred to the lipoamide cofactor of the H protein. The polypeptide is Glycine dehydrogenase (decarboxylating), mitochondrial (gcvP) (Dictyostelium discoideum (Social amoeba)).